Reading from the N-terminus, the 1756-residue chain is RANBP2-like and GRIP domain-containing protein 2 (1756 aa).

S21 is modified (phosphoserine). TPR repeat units follow at residues 59–92, 583–616, and 647–680; these read PRAHRFLGLLYELEENTEKAVECYRRSLELNPPQ, QKMGRGLNSSYDQQEYIGRSVHYWKKVLPLLKII, and EDAHITFAILDAVHGNIEDAVTAFESIKSVVSYW. Residues 759 to 804 form a disordered region; sequence GPLYKNGSLRNADSEIKHSTPSPTKYSLSPSKSYKYSPKTPPRWAE. Residues 777-796 show a composition bias toward low complexity; the sequence is STPSPTKYSLSPSKSYKYSP. Residues 1029–1165 form the RanBD1 1 domain; the sequence is HFEPVVQMPE…FEECQRLLLD (137 aa). Disordered regions lie at residues 1206 to 1241 and 1299 to 1324; these read TKVTEEENKGSGTGAAGASDTTIKPNPENTGPTLEW and AKLNQSGTSVGTDEESDVTQEEERDG. Residues 1228-1237 are compositionally biased toward polar residues; that stretch reads IKPNPENTGP. Positions 1310 to 1322 are enriched in acidic residues; that stretch reads TDEESDVTQEEER. Positions 1326 to 1462 constitute a RanBD1 2 domain; sequence YFEPVVPLPD…FDEAKTAQEK (137 aa). Residues 1573–1586 show a composition bias toward polar residues; sequence NDSETSSVAQSGSE. Positions 1573-1614 are disordered; it reads NDSETSSVAQSGSESKVEPKKCELSKNSDIEQSSDSKVKNLS. The span at 1587–1610 shows a compositional bias: basic and acidic residues; sequence SKVEPKKCELSKNSDIEQSSDSKV. A GRIP domain is found at 1693 to 1743; sequence QEESAANVEHLKNVLLQFIFLKPGSERESLLPVINTMLQLSPEEKGKLAAV.

In Homo sapiens (Human), this protein is RANBP2-like and GRIP domain-containing protein 2 (RGPD2).